A 458-amino-acid chain; its full sequence is Exodeoxyribonuclease 7 large subunit (458 aa).

This sequence belongs to the XseA family. In terms of assembly, heterooligomer composed of large and small subunits.

The protein resides in the cytoplasm. It catalyses the reaction Exonucleolytic cleavage in either 5'- to 3'- or 3'- to 5'-direction to yield nucleoside 5'-phosphates.. Bidirectionally degrades single-stranded DNA into large acid-insoluble oligonucleotides, which are then degraded further into small acid-soluble oligonucleotides. This Serratia proteamaculans (strain 568) protein is Exodeoxyribonuclease 7 large subunit.